Reading from the N-terminus, the 442-residue chain is GTPase Der (442 aa).

2 EngA-type G domains span residues 2–167 and 175–351; these read RTIA…PIQN and FKFC…EQAM. GTP-binding positions include 8 to 15, 55 to 59, 119 to 122, 181 to 188, 228 to 232, and 293 to 296; these read GKPNVGKS, DTGGI, NKVE, GRPNVGKS, DTAGV, and NKWD. In terms of domain architecture, KH-like spans 352–436; it reads RKVATSLLND…PITLYWQDKN (85 aa).

It belongs to the TRAFAC class TrmE-Era-EngA-EngB-Septin-like GTPase superfamily. EngA (Der) GTPase family. As to quaternary structure, associates with the 50S ribosomal subunit.

Its function is as follows. GTPase that plays an essential role in the late steps of ribosome biogenesis. This Ureaplasma urealyticum serovar 10 (strain ATCC 33699 / Western) protein is GTPase Der.